A 141-amino-acid chain; its full sequence is Large ribosomal subunit protein uL11 (141 aa).

It belongs to the universal ribosomal protein uL11 family. As to quaternary structure, part of the ribosomal stalk of the 50S ribosomal subunit. Interacts with L10 and the large rRNA to form the base of the stalk. L10 forms an elongated spine to which L12 dimers bind in a sequential fashion forming a multimeric L10(L12)X complex. One or more lysine residues are methylated.

Functionally, forms part of the ribosomal stalk which helps the ribosome interact with GTP-bound translation factors. This Exiguobacterium sibiricum (strain DSM 17290 / CCUG 55495 / CIP 109462 / JCM 13490 / 255-15) protein is Large ribosomal subunit protein uL11.